We begin with the raw amino-acid sequence, 224 residues long: Transcriptional regulatory protein CiaR (224 aa).

A Response regulatory domain is found at 3–116 (KILLVEDDLG…ELKMRIQALL (114 aa)). D51 is modified (4-aspartylphosphate). Residues 124-222 (ENTLTYGNIV…LRSVGYLLKD (99 aa)) constitute a DNA-binding region (ompR/PhoB-type).

In terms of processing, phosphorylated by CiaH.

The protein localises to the cytoplasm. Its function is as follows. Member of the two-component regulatory system CiaH/CiaR. Involved in early steps of competence regulation and in penicillin susceptibility. This is Transcriptional regulatory protein CiaR (ciaR) from Streptococcus pneumoniae (strain ATCC BAA-255 / R6).